Here is a 269-residue protein sequence, read N- to C-terminus: Glutamate racemase (269 aa).

Substrate-binding positions include 7-8 (DS) and 39-40 (YG). Cys-70 serves as the catalytic Proton donor/acceptor. 71-72 (NT) is a binding site for substrate. The Proton donor/acceptor role is filled by Cys-194. Residue 195–196 (TH) coordinates substrate.

The protein belongs to the aspartate/glutamate racemases family.

The catalysed reaction is L-glutamate = D-glutamate. It participates in cell wall biogenesis; peptidoglycan biosynthesis. Provides the (R)-glutamate required for cell wall biosynthesis. The chain is Glutamate racemase from Ruegeria pomeroyi (strain ATCC 700808 / DSM 15171 / DSS-3) (Silicibacter pomeroyi).